The sequence spans 74 residues: Delta-stichotoxin-Sgt2a (74 aa).

The N-terminal stretch at 1–19 is a signal peptide; it reads MNRLIILVFAAVFLTLASA. A propeptide spanning residues 20 to 28 is cleaved from the precursor; that stretch reads EVSEDVNMA. Disulfide bonds link cysteine 34/cysteine 71, cysteine 36/cysteine 64, and cysteine 57/cysteine 72.

The protein belongs to the sea anemone sodium channel inhibitory toxin family. Type I subfamily.

It localises to the secreted. Its subcellular location is the nematocyst. In terms of biological role, binds specifically to voltage-gated sodium channels (Nav), thereby delaying their inactivation during signal transduction. The sequence is that of Delta-stichotoxin-Sgt2a from Stichodactyla gigantea (Giant carpet anemone).